The following is a 590-amino-acid chain: PWWP domain-containing protein 2B (590 aa).

Disordered regions lie at residues 52–110, 182–347, 360–398, and 426–467; these read APLP…PPLP, KSTL…EHEP, YLRD…PQGP, and DSLD…TVPP. A Phosphoserine modification is found at Ser-84. Residues 99-110 are compositionally biased toward pro residues; that stretch reads PEPPPPLVPPLP. Residues Ser-186 and Ser-206 each carry the phosphoserine modification. Basic and acidic residues predominate over residues 208–217; sequence PDRELRKPEE. Ser-250 is modified (phosphoserine). Over residues 296–305 the composition is skewed to basic and acidic residues; it reads VLDRESRDRP. Positions 376-385 are enriched in low complexity; the sequence is GLADLSSGSS. Ser-447 bears the Phosphoserine mark. The PWWP domain maps to 490–550; it reads VGDIVWGKIH…ISKLSPFSEF (61 aa).

Component of a MTA1-specific subcomplex of the NuRD complex composed of PWWP2B, MTA1 and HDAC1 but does not contain CHD4 and MBD3. Interacts with MTA1 and HDAC1. Interacts with MTA2, MTA3, HDAC2, RBBP4, RBBP7, BRCC3 and ZNF516. Does not interact with CHD4 and MBD3. Deubiquitinated by BRCC3; leading to its stabilization.

In terms of biological role, chromatin-binding protein that acts as an adapter between distinct nucleosome components (H3K36me3 or H2A.Z) and chromatin-modifying complexes, contributing to the regulation of the levels of histone acetylation at actively transcribed genes. Competes with CHD4 and MBD3 for interaction with MTA1 to form a NuRD subcomplex, preventing the formation of full NuRD complex (containing CHD4 and MBD3), leading to recruitment of HDACs to gene promoters resulting in turn in the deacetylation of nearby H3K27 and H2A.Z. Plays a role in facilitating transcriptional elongation through regulation of histone acetylation. Negatively regulates brown adipocyte thermogenesis by interacting with and stabilizing HDAC1 at the UCP1 gene promoter, thereby promoting histone deacetylation at the promoter leading to the repression of UCP1 expression. This chain is PWWP domain-containing protein 2B (PWWP2B), found in Homo sapiens (Human).